Reading from the N-terminus, the 354-residue chain is Glutamine synthetase (354 aa).

The 80-residue stretch at 22–101 folds into the GS beta-grasp domain; sequence IQAEYVWIDG…VLAETYNNDG (80 aa). The 247-residue stretch at 108–354 folds into the GS catalytic domain; the sequence is HRHHAKKVFD…IIAETTILDK (247 aa).

The protein belongs to the glutamine synthetase family. In terms of assembly, homooctamer.

The protein resides in the cytoplasm. It catalyses the reaction L-glutamate + NH4(+) + ATP = L-glutamine + ADP + phosphate + H(+). This chain is Glutamine synthetase (glnA), found in Agaricus bisporus (White button mushroom).